A 1139-amino-acid polypeptide reads, in one-letter code: Exportin-T (1139 aa).

The disordered stretch occupies residues 562-589; the sequence is ARNKLRAAQGSGRTTPSSSDNVDLGPSS. The segment covering 572–589 has biased composition (polar residues); the sequence is SGRTTPSSSDNVDLGPSS.

It belongs to the exportin family.

Its subcellular location is the nucleus. The protein localises to the cytoplasm. In terms of biological role, tRNA nucleus export receptor which facilitates tRNA translocation across the nuclear pore complex. Involved in pre-tRNA splicing, probably by affecting the interaction of pre-tRNA with splicing endonuclease. The polypeptide is Exportin-T (LOS1) (Cryptococcus neoformans var. neoformans serotype D (strain B-3501A) (Filobasidiella neoformans)).